Consider the following 194-residue polypeptide: ATP-dependent Clp protease proteolytic subunit 4 (194 aa).

Serine 100 functions as the Nucleophile in the catalytic mechanism. Histidine 125 is an active-site residue.

The protein belongs to the peptidase S14 family. As to quaternary structure, fourteen ClpP subunits assemble into 2 heptameric rings which stack back to back to give a disk-like structure with a central cavity, resembling the structure of eukaryotic proteasomes.

The protein localises to the cytoplasm. The catalysed reaction is Hydrolysis of proteins to small peptides in the presence of ATP and magnesium. alpha-casein is the usual test substrate. In the absence of ATP, only oligopeptides shorter than five residues are hydrolyzed (such as succinyl-Leu-Tyr-|-NHMec, and Leu-Tyr-Leu-|-Tyr-Trp, in which cleavage of the -Tyr-|-Leu- and -Tyr-|-Trp bonds also occurs).. Functionally, cleaves peptides in various proteins in a process that requires ATP hydrolysis. Has a chymotrypsin-like activity. Plays a major role in the degradation of misfolded proteins. The sequence is that of ATP-dependent Clp protease proteolytic subunit 4 from Rhodococcus jostii (strain RHA1).